A 474-amino-acid chain; its full sequence is 6-phospho-beta-galactosidase (474 aa).

Residues Gln19, His116, Asn159, Glu160, and Asn297 each coordinate D-galactose 6-phosphate. Glu160 serves as the catalytic Proton donor. Glu375 serves as the catalytic Nucleophile. Positions 433, 434, 440, and 442 each coordinate D-galactose 6-phosphate.

The protein belongs to the glycosyl hydrolase 1 family.

The catalysed reaction is a 6-phospho-beta-D-galactoside + H2O = D-galactose 6-phosphate + an alcohol. It participates in carbohydrate metabolism; lactose degradation; D-galactose 6-phosphate and beta-D-glucose from lactose 6-phosphate: step 1/1. This chain is 6-phospho-beta-galactosidase, found in Lacticaseibacillus rhamnosus (Lactobacillus rhamnosus).